The chain runs to 338 residues: Heat-inducible transcription repressor HrcA (338 aa).

It belongs to the HrcA family.

Its function is as follows. Negative regulator of class I heat shock genes (grpE-dnaK-dnaJ and groELS operons). Prevents heat-shock induction of these operons. The sequence is that of Heat-inducible transcription repressor HrcA from Nitrosomonas europaea (strain ATCC 19718 / CIP 103999 / KCTC 2705 / NBRC 14298).